A 573-amino-acid polypeptide reads, in one-letter code: 60 kDa lysophospholipase (573 aa).

The region spanning 9-355 (RRLLAVYTGG…DVRKELLTKD (347 aa)) is the Asparaginase/glutaminase domain. Threonine 19 functions as the Acyl-ester intermediate in the catalytic mechanism. Residues 41–350 (TLPMFHDEEH…PGLSLDVRKE (310 aa)) are asparaginase. Residues 84-86 (DSS) and 116-117 (TD) contribute to the substrate site. ANK repeat units lie at residues 141 to 170 (GAQV…YVIP), 399 to 429 (ALVP…DLGL), 433 to 462 (NGQT…DVNT), 466 to 495 (DGFS…SLST), and 533 to 562 (DGHS…AVGA).

This sequence in the N-terminal section; belongs to the asparaginase 1 family. Monomer.

The enzyme catalyses a 1-acyl-sn-glycero-3-phosphocholine + H2O = sn-glycerol 3-phosphocholine + a fatty acid + H(+). It catalyses the reaction L-asparagine + H2O = L-aspartate + NH4(+). The catalysed reaction is a 1-O-alkyl-2-acetyl-sn-glycero-3-phosphocholine + H2O = a 1-O-alkyl-sn-glycero-3-phosphocholine + acetate + H(+). It carries out the reaction 1-hexadecanoyl-sn-glycero-3-phosphocholine + H2O = sn-glycerol 3-phosphocholine + hexadecanoate + H(+). The enzyme catalyses 2 1-hexadecanoyl-sn-glycero-3-phosphocholine = 1,2-dihexadecanoyl-sn-glycero-3-phosphocholine + sn-glycerol 3-phosphocholine. It catalyses the reaction 1-octadecanoyl-sn-glycero-3-phosphocholine + H2O = octadecanoate + sn-glycerol 3-phosphocholine + H(+). The catalysed reaction is 1-(9Z-octadecenoyl)-sn-glycero-3-phosphocholine + H2O = sn-glycerol 3-phosphocholine + (9Z)-octadecenoate + H(+). It carries out the reaction 1-hexadecanoyl-sn-glycero-3-phosphoethanolamine + H2O = sn-glycero-3-phosphoethanolamine + hexadecanoate + H(+). The enzyme catalyses 1-(9Z-octadecenoyl)-sn-glycero-3-phosphoethanolamine + H2O = sn-glycero-3-phosphoethanolamine + (9Z)-octadecenoate + H(+). It catalyses the reaction 1-hexadecanoyl-sn-glycero-3-phosphoethanolamine + 1-hexadecanoyl-sn-glycero-3-phosphocholine = 1,2-dihexadecanoyl-sn-glycero-3-phosphoethanolamine + sn-glycerol 3-phosphocholine. The catalysed reaction is 2-(5Z,8Z,11Z,14Z)-eicosatetraenoyl-sn-glycero-3-phosphocholine + H2O = sn-glycerol 3-phosphocholine + (5Z,8Z,11Z,14Z)-eicosatetraenoate + H(+). It carries out the reaction 2-hexadecanoyl-sn-glycero-3-phosphocholine + H2O = sn-glycerol 3-phosphocholine + hexadecanoate + H(+). The enzyme catalyses 2 2-hexadecanoyl-sn-glycero-3-phosphocholine = 1,2-dihexadecanoyl-sn-glycero-3-phosphocholine + sn-glycerol 3-phosphocholine. It catalyses the reaction 1-O-(9Z)-octadecenoyl-2-O-acetyl-sn-glycero-3-phosphocholine + H2O = 2-acetyl-sn-glycero-3-phosphocholine + (9Z)-octadecenoate + H(+). The catalysed reaction is a 1-acyl-sn-glycero-3-phospho-(1D-myo-inositol) + 1-hexadecanoyl-sn-glycero-3-phosphocholine = a 1-acyl-2-hexadecanoyl-sn-glycero-3-phospho-(1D-myo-inositol) + sn-glycerol 3-phosphocholine. It carries out the reaction 2 2-(5Z,8Z,11Z,14Z)-eicosatetraenoyl-sn-glycero-3-phosphocholine = 1,2-di-(5Z,8Z,11Z,14Z-eicosatetraenoyl)-sn-glycero-3-phosphocholine + sn-glycerol 3-phosphocholine. In terms of biological role, exhibits lysophospholipase, transacylase, PAF acetylhydrolase and asparaginase activities. Can catalyze three types of transacylation reactions: (1) acyl transfer from 1-acyl-sn-glycero-3-phosphocholine (1-acyl-GPC) to the sn-1(3) positions of glycerol and 2-acylglycerol (sn-1 to -1(3) transfer), (2) acyl transfer from 1-acyl-GPC to the sn-2 positions of 1-acyl-GPC, 1-acyl-sn-glycero-3-phosphoethanolamine (1-acyl-GPE), and other lysophospholipids (sn-1 to -2 transfer) and (3) acyl transfer from 2-acyl-GPC to the sn-1 position of 2-acyl-GPC and 2-acyl-GPE (sn-2 to -1 transfer). Mediates the synthesis of 1-arachidonoyl species of phospholipids by transferring the arachidonoyl residue from 2-arachidonoyl lysophospholipid to the sn-1 position of 2-acyl lysophospholipid. This chain is 60 kDa lysophospholipase (ASPG), found in Homo sapiens (Human).